A 371-amino-acid chain; its full sequence is Trans-enoyl reductase calK (371 aa).

Residue 51–54 (NDHK) coordinates NADP(+). Substrate is bound at residue 145–152 (WSTISLAF). Residues 181-184 (GTAS), 204-207 (SNQS), Tyr-222, and 269-270 (LE) contribute to the NADP(+) site. 289-293 (GFQVL) lines the substrate pocket. 359–360 (VR) is an NADP(+) binding site.

This sequence belongs to the zinc-containing alcohol dehydrogenase family. Monomer.

It participates in secondary metabolite biosynthesis. In terms of biological role, trans-enoyl reductase; part of the gene cluster that mediates the biosynthesis of calbistrin A and related compounds. Calbistrin A is a secondary metabolite with an interesting structure that was recently found to have bioactivity against leukemia cells. It consists of two polyketides linked by an ester bond: a bicyclic decalin containing polyketide and a linear 12 carbon dioic acid structure. The polyketide synthase calA is probably responsible for forming the decalin moiety. Because calA lacks a designated enoylreductase (ER) domain, the required activity is provided by the trans-enoyl reductase calK. Following release from the PKS, calF then probably catalyzes the oxidation and the subsequent Diels Alder cycloisomerization that lead to the formation of the decalin moiety. The decalin polyketide backbone includes two C-methyl groups, at C7 and C11 in backbone, of which the C7 position is probably methylated by the methyltransferase domain of calA. A candidate for adding the methyl group at C11, if not done by CalA, is the cluster methyltransferase calH. Several additional tailoring enzymes within the cluster could be involved in the modification of the decalin polyketide product. Those include the 3 cytochrome P450 monooxygenases CalE, CalG and CalL, of which one might be responsible for the introduction of the extra hydroxyl group attached to the backbone of the decalin moiety, at position C9 in the backbone, that allows for attachment of the linear moiety. One tailoring enzyme activity that is expected to be involved in biosynthesis of calbistrin is an acyltransferase for connecting the two polyketide synthase products, and which could be performed by the cluster acyltransferase calJ. The enzyme responsible for the biosynthesis of the linear moiety, probably a second PKS, has not been identified yet. This Penicillium decumbens protein is Trans-enoyl reductase calK.